The sequence spans 432 residues: uncharacterized protein (432 aa).

Basic residues predominate over residues 1-18 (MAIGDKRKKNRKNKQNKK). Disordered regions lie at residues 1 to 23 (MAIGDKRKKNRKNKQNKKNKNDN), 37 to 56 (NSNSLVNSNNKNNNNKNGNG), and 122 to 168 (STNS…GSSL). Composition is skewed to low complexity over residues 37 to 53 (NSNSLVNSNNKNNNNKN), 122 to 147 (STNSNNNNNSTNGNSNSPSIIIQQQQ), and 154 to 168 (ESQSSNNNNNNGSSL). Residues 181–226 (LNDQLKIVQLEQKIVNLEKEIQRMRNEQNQIHKQNLNQYHELLKQI) are a coiled coil. 2 disordered regions span residues 270–290 (VQPVSTPSSSSNSLASKKSNG) and 310–432 (SSKF…STLR). Over residues 274–288 (STPSSSSNSLASKKS) the composition is skewed to low complexity. The span at 311-324 (SKFAQSNSSPSRVN) shows a compositional bias: polar residues. Over residues 352–378 (KKSATTTTTSSSSNNATTTTAKGSTST) the composition is skewed to low complexity. Residues 383–414 (ITNSNNIKNSVLSPKSITKPNTPSNIIFSPLS) show a composition bias toward polar residues.

This is an uncharacterized protein from Dictyostelium discoideum (Social amoeba).